A 128-amino-acid chain; its full sequence is Small ribosomal subunit protein bS6 (128 aa).

Residues 105–128 (AKVTEEEPVEAAPEAKVETTTEEE) form a disordered region. Basic and acidic residues predominate over residues 117–128 (PEAKVETTTEEE).

Belongs to the bacterial ribosomal protein bS6 family.

Binds together with bS18 to 16S ribosomal RNA. In Geotalea daltonii (strain DSM 22248 / JCM 15807 / FRC-32) (Geobacter daltonii), this protein is Small ribosomal subunit protein bS6.